A 24-amino-acid polypeptide reads, in one-letter code: M-poneritoxin-Ng1e (24 aa).

As to expression, expressed by the venom gland.

The protein resides in the secreted. It is found in the target cell membrane. Functionally, has a broad spectrum of activity against both Gram-positive and Gram-negative bacteria and S.cerevisiae. Has insecticidal and hemolytic activities. May act by disrupting the integrity of the bacterial cell membrane. The protein is M-poneritoxin-Ng1e of Neoponera goeldii (Ponerine ant).